We begin with the raw amino-acid sequence, 572 residues long: Dihydroxy-acid dehydratase (572 aa).

A [2Fe-2S] cluster-binding site is contributed by Cys57. Residue Asp89 coordinates Mg(2+). Cys130 serves as a coordination point for [2Fe-2S] cluster. Mg(2+) contacts are provided by Asp131 and Lys132. An N6-carboxylysine modification is found at Lys132. Cys202 contacts [2Fe-2S] cluster. Glu453 lines the Mg(2+) pocket. The active-site Proton acceptor is Ser479.

This sequence belongs to the IlvD/Edd family. In terms of assembly, homodimer. [2Fe-2S] cluster is required as a cofactor. It depends on Mg(2+) as a cofactor.

The catalysed reaction is (2R)-2,3-dihydroxy-3-methylbutanoate = 3-methyl-2-oxobutanoate + H2O. It catalyses the reaction (2R,3R)-2,3-dihydroxy-3-methylpentanoate = (S)-3-methyl-2-oxopentanoate + H2O. It participates in amino-acid biosynthesis; L-isoleucine biosynthesis; L-isoleucine from 2-oxobutanoate: step 3/4. Its pathway is amino-acid biosynthesis; L-valine biosynthesis; L-valine from pyruvate: step 3/4. Functions in the biosynthesis of branched-chain amino acids. Catalyzes the dehydration of (2R,3R)-2,3-dihydroxy-3-methylpentanoate (2,3-dihydroxy-3-methylvalerate) into 2-oxo-3-methylpentanoate (2-oxo-3-methylvalerate) and of (2R)-2,3-dihydroxy-3-methylbutanoate (2,3-dihydroxyisovalerate) into 2-oxo-3-methylbutanoate (2-oxoisovalerate), the penultimate precursor to L-isoleucine and L-valine, respectively. This is Dihydroxy-acid dehydratase from Streptococcus sanguinis (strain SK36).